The chain runs to 440 residues: MFLAQEIIRKKRDGHALSDEEIRFFINGIRDNTISEGQIAALAMTIFFHDMTMPERVSLTMAMRDSGTVLDWKSLHLNGPIVDKHSTGGVGDVTSLMLGPMVAACGGYIPMISGRGLGHTGGTLDKLESIPGFDIFPDDNRFREIIKDVGVAIIGQTSSLAPADKRFYATRDITATVDSIPLITASILAKKLAEGLDALVMDVKVGSGAFMPTYELSEALAEAIVGVANGAGVRTTALLTDMNQVLASSAGNAVEVREAVQFLTGEYRNPRLFDVTMALCVEMLISGKLAKDDAEARAKLQAVLDNGKAAEVFGRMVAAQKGPTDFVENYAKYLPTAMLTKAVYADTEGFVSEMDTRALGMAVVAMGGGRRQASDTIDYSVGFTDMARLGDQVDGQRPLAVILAKDENSWQEAAKAVKAAIKLADNAPESTPTVYRRISE.

This sequence belongs to the thymidine/pyrimidine-nucleoside phosphorylase family. As to quaternary structure, homodimer.

The enzyme catalyses thymidine + phosphate = 2-deoxy-alpha-D-ribose 1-phosphate + thymine. The protein operates within pyrimidine metabolism; dTMP biosynthesis via salvage pathway; dTMP from thymine: step 1/2. Functionally, the enzymes which catalyze the reversible phosphorolysis of pyrimidine nucleosides are involved in the degradation of these compounds and in their utilization as carbon and energy sources, or in the rescue of pyrimidine bases for nucleotide synthesis. The sequence is that of Thymidine phosphorylase from Shigella flexneri serotype 5b (strain 8401).